Reading from the N-terminus, the 96-residue chain is Small ribosomal subunit protein bS18 (96 aa).

Basic and acidic residues predominate over residues 1 to 22 (MYKDVDSHQRDSRSDGHQDGFK). The disordered stretch occupies residues 1–25 (MYKDVDSHQRDSRSDGHQDGFKKNP).

It belongs to the bacterial ribosomal protein bS18 family. As to quaternary structure, part of the 30S ribosomal subunit. Forms a tight heterodimer with protein bS6.

In terms of biological role, binds as a heterodimer with protein bS6 to the central domain of the 16S rRNA, where it helps stabilize the platform of the 30S subunit. This Borrelia hermsii (strain HS1 / DAH) protein is Small ribosomal subunit protein bS18.